Here is a 294-residue protein sequence, read N- to C-terminus: tRNA dimethylallyltransferase (294 aa).

10 to 17 (GPTAVGKT) serves as a coordination point for ATP. Position 12–17 (12–17 (TAVGKT)) interacts with substrate. An interaction with substrate tRNA region spans residues 35-38 (DSQQ).

The protein belongs to the IPP transferase family. As to quaternary structure, monomer. Mg(2+) is required as a cofactor.

The catalysed reaction is adenosine(37) in tRNA + dimethylallyl diphosphate = N(6)-dimethylallyladenosine(37) in tRNA + diphosphate. Catalyzes the transfer of a dimethylallyl group onto the adenine at position 37 in tRNAs that read codons beginning with uridine, leading to the formation of N6-(dimethylallyl)adenosine (i(6)A). This is tRNA dimethylallyltransferase from Streptococcus pneumoniae serotype 4 (strain ATCC BAA-334 / TIGR4).